The sequence spans 1484 residues: Chromosome partition protein MukB (1484 aa).

ATP is bound at residue 34–41; sequence GGNGAGKS. Coiled-coil stretches lie at residues 326–418, 444–472, and 509–602; these read LEAD…QYNQ, LDTF…QTAH, and RHLA…QRAP. Positions 666-783 are flexible hinge; that stretch reads PGGAEDQRLN…SLPIFGRAAR (118 aa). Coiled-coil stretches lie at residues 835-923, 977-1116, and 1209-1265; these read EAEI…AKLE, EMLS…AKAG, and VEAI…LQSV. Positions 1049–1074 are disordered; it reads ADSGAEERARQRRDELHAQLSNNRSR. Over residues 1051 to 1065 the composition is skewed to basic and acidic residues; sequence SGAEERARQRRDELH.

The protein belongs to the SMC family. MukB subfamily. Homodimerization via its hinge domain. Binds to DNA via its C-terminal region. Interacts, and probably forms a ternary complex, with MukE and MukF via its C-terminal region. The complex formation is stimulated by calcium or magnesium. Interacts with tubulin-related protein FtsZ.

It is found in the cytoplasm. The protein resides in the nucleoid. Its function is as follows. Plays a central role in chromosome condensation, segregation and cell cycle progression. Functions as a homodimer, which is essential for chromosome partition. Involved in negative DNA supercoiling in vivo, and by this means organize and compact chromosomes. May achieve or facilitate chromosome segregation by condensation DNA from both sides of a centrally located replisome during cell division. The polypeptide is Chromosome partition protein MukB (Salmonella dublin (strain CT_02021853)).